Consider the following 123-residue polypeptide: Protein Wnt-3a (123 aa).

The O-palmitoleoyl serine moiety is linked to residue S1. A disulfide bridge connects residues C89 and C104. An N-linked (GlcNAc...) asparagine glycan is attached at N90.

Belongs to the Wnt family. In terms of processing, disulfide bonds have critical and distinct roles in secretion and activity. Loss of each conserved cysteine results in high molecular weight oxidized Wnt oligomers, which are formed through inter-Wnt disulfide bonding. Palmitoleoylation is required for efficient binding to frizzled receptors. Depalmitoleoylation leads to Wnt signaling pathway inhibition.

The protein localises to the secreted. It localises to the extracellular space. It is found in the extracellular matrix. Functionally, ligand for members of the frizzled family of seven transmembrane receptors. Functions in the canonical Wnt signaling pathway that results in activation of transcription factors of the TCF/LEF family. Required for normal embryonic mesoderm development and formation of caudal somites. Required for normal morphogenesis of the developing neural tube. The sequence is that of Protein Wnt-3a (WNT-3A) from Pituophis melanoleucus (Pine snake).